The primary structure comprises 297 residues: Thiosulfate sulfurtransferase (297 aa).

Residue lysine 14 is modified to N6-acetyllysine; alternate. Residue lysine 14 is modified to N6-succinyllysine; alternate. The region spanning 25 to 143 (LGPGLRVLDA…WLKEGHPVTS (119 aa)) is the Rhodanese 1 domain. O-linked (GlcNAc) serine glycosylation is present at serine 35. Serine 38 is subject to Phosphoserine. Lysine 136 is subject to N6-acetyllysine; alternate. Residue lysine 136 is modified to N6-succinyllysine; alternate. Residues 144-159 (EPSRPEPAVFKATLDR) form a hinge region. Position 163 is an N6-acetyllysine (lysine 163). A Rhodanese 2 domain is found at 173-288 (QSKRFQLVDS…WFHQAPPETR (116 aa)). Lysine 175 is modified (N6-acetyllysine; alternate). At lysine 175 the chain carries N6-succinyllysine; alternate. Arginine 187 contacts substrate. An N6-acetyllysine; alternate modification is found at lysine 224. Position 224 is an N6-succinyllysine; alternate (lysine 224). Lysine 236 bears the N6-acetyllysine mark. Lysine 237 is subject to N6-acetyllysine; alternate. Lysine 237 carries the post-translational modification N6-succinyllysine; alternate. Cysteine 248 functions as the Cysteine persulfide intermediate in the catalytic mechanism. Substrate is bound at residue lysine 250.

As to quaternary structure, monomer.

The protein localises to the mitochondrion matrix. The enzyme catalyses thiosulfate + hydrogen cyanide = thiocyanate + sulfite + 2 H(+). In terms of biological role, together with MRPL18, acts as a mitochondrial import factor for the cytosolic 5S rRNA. Only the nascent unfolded cytoplasmic form is able to bind to the 5S rRNA. Formation of iron-sulfur complexes and cyanide detoxification. Binds molecular oxygen and sulfur. The polypeptide is Thiosulfate sulfurtransferase (TST) (Cricetulus griseus (Chinese hamster)).